The primary structure comprises 120 residues: Movement protein TGB2 (120 aa).

Over 1-8 (MPFAQPPD) the chain is Cytoplasmic. Residues 9 to 29 (YSKSVFPIAVGIAVAVVLFTL) traverse the membrane as a helical segment. Residues 30–71 (TRSTLPQVGDNIHNLPHGGNYQDGTKRISYCGPRDSFPSSSL) are Lumenal-facing. Residues 72–92 (ISSGTPMIIGIIIFLIFAIYV) traverse the membrane as a helical segment. Topologically, residues 93 to 120 (SEKWSRSGSRRCSCCVPGAPACTATVHE) are cytoplasmic.

Belongs to the Tymovirales TGBp2 protein family.

It is found in the host endoplasmic reticulum membrane. Functionally, plays a role in viral cell-to-cell propagation, by facilitating genome transport to neighboring plant cells through plasmosdesmata,. The polypeptide is Movement protein TGB2 (Crataegus (hawthorn)).